The chain runs to 380 residues: Cytochrome b (380 aa).

4 helical membrane passes run 33-53 (FGSLLGICLMVQIITGLFLAM), 77-98 (WLIRYAHANGASMFFICLFIHV), 113-133 (WNIGIILLLTTMATAFVGYVL), and 178-198 (FFAFHFILPFIITALVLVHLL). 2 residues coordinate heme b: H83 and H97. Residues H182 and H196 each coordinate heme b. H201 is a binding site for a ubiquinone. 4 helical membrane passes run 226–246 (IKDILGVLLLLMVLMFLVLFF), 288–308 (LGGVLALLLSILILAAFPLLN), 320–340 (ITQTLYWIFVANLLILTWIGG), and 347–367 (FTTIGQISSIMYFMIIVIFMP).

The protein belongs to the cytochrome b family. The cytochrome bc1 complex contains 11 subunits: 3 respiratory subunits (MT-CYB, CYC1 and UQCRFS1), 2 core proteins (UQCRC1 and UQCRC2) and 6 low-molecular weight proteins (UQCRH/QCR6, UQCRB/QCR7, UQCRQ/QCR8, UQCR10/QCR9, UQCR11/QCR10 and a cleavage product of UQCRFS1). This cytochrome bc1 complex then forms a dimer. The cofactor is heme b.

The protein localises to the mitochondrion inner membrane. Its function is as follows. Component of the ubiquinol-cytochrome c reductase complex (complex III or cytochrome b-c1 complex) that is part of the mitochondrial respiratory chain. The b-c1 complex mediates electron transfer from ubiquinol to cytochrome c. Contributes to the generation of a proton gradient across the mitochondrial membrane that is then used for ATP synthesis. The chain is Cytochrome b (MT-CYB) from Microryzomys minutus (Forest small rice rat).